Reading from the N-terminus, the 973-residue chain is MEKGKGVSRKGRKLASSRRRQAREPADGQDAPVAAEAESWPSDADAELQGFFQDCGAKERGFVTREDLAEARFSFLGGEEPQMIFDWVDVESRGHLSLEEFSSGLKNVFGSSPGTHRLRTKRSLPSQRESVTSTLPVPEEADAEEKEAFLALIGQMETGHSLSEQAEIWKLWRELRQEEPQLAGNLEGFLAKMSSRLQEAQADREALAWTLRKRDSDHLYKVRQLYEETEEQIRREKQQLQAQSDSRGMALSAHMQEALEAKEQEVQRLAEGQRELEAQLLHLSSTQQEANRENLQLREAERDLAGQLEEVRGQLQVTRGHLDTARTRGKVSWQIEEEPSVPRANKEAPDPQAVPTEEAPLPELFGNNDNWDQFLSSIEAHSHRTLRLCWSPPPSPSSTSAPQTPRIVRQISISKISALQFSQEPASDPDPGPRGSPEVPPGGAKDGKGVEDPKGQDEQDVSSKQPVDSPDSDARPKGSFLWSLPGALTAESGTVEAAFRDQLAFEAEPPPQGLSSSPQSPAGSRKQTQTPDLGDKSLWSGPDPAKQSLEREVMAEDLKLGLGSQGATALPEGATEPSLSLESVDQVGPERPVQDATHLARQESHAKGFQEAPGQVLSLDSLPTHLPQSLEEQLRPEEGNLGERGQQDPGSEASESHGLEARSMESPQQDDPLPNTSQPPAETEVPAPGQMSPPRGSPILGAGAGLAVGTPETTHTLLTLAESEAQPGPVSMPVQVESKSGAPQPTEPEAESRPEDPRTDLQEAERSSSPGDLTAGKPQADPDYLYHVVFLGDSNVGKTSFLHLLHHDAFATGLTATVGVDFRVKNLLVDNKTFALQLWDTAGQERYHSLTRQLLRKAEGVVLMYDVTSQESFTHVRYWLDCLQDAGVEGVAMVLLGNKMDCEEERQVPTEAGRRLAQELGVSFGECSAALGHNILEPMMNLARSLKMQEDRLKASLAEVTHPQSTKRAGCCH.

The span at 1 to 21 shows a compositional bias: basic residues; sequence MEKGKGVSRKGRKLASSRRRQ. Residues 1-42 are disordered; the sequence is MEKGKGVSRKGRKLASSRRRQAREPADGQDAPVAAEAESWPS. Positions 77–111 constitute an EF-hand domain; sequence GGEEPQMIFDWVDVESRGHLSLEEFSSGLKNVFGS. The tract at residues 112-140 is disordered; that stretch reads SPGTHRLRTKRSLPSQRESVTSTLPVPEE. The span at 123-135 shows a compositional bias: polar residues; sequence SLPSQRESVTSTL. A coiled-coil region spans residues 219–310; the sequence is LYKVRQLYEE…ERDLAGQLEE (92 aa). Disordered regions lie at residues 319–368, 421–481, 493–708, and 724–779; these read RGHL…FGNN, FSQE…GSFL, GTVE…GLAV, and EAQP…GKPQ. Over residues 428-440 the composition is skewed to pro residues; that stretch reads DPDPGPRGSPEVP. Positions 445 to 457 are enriched in basic and acidic residues; the sequence is KDGKGVEDPKGQD. Over residues 513-524 the composition is skewed to low complexity; it reads GLSSSPQSPAGS. 3 stretches are compositionally biased toward basic and acidic residues: residues 548–559, 598–608, and 654–663; these read SLEREVMAEDLK, HLARQESHAKG, and SESHGLEARS. Over residues 665-680 the composition is skewed to polar residues; that stretch reads ESPQQDDPLPNTSQPP. The segment covering 750 to 766 has biased composition (basic and acidic residues); it reads AESRPEDPRTDLQEAER. Residues 792–799, 840–844, and 898–901 each bind GTP; these read GDSNVGKT, DTAGQ, and NKMD. 2 S-geranylgeranyl cysteine lipidation sites follow: cysteine 971 and cysteine 972.

It belongs to the small GTPase superfamily. Rab family.

The protein resides in the cell membrane. This is Ras-related protein Rab-44 (Rab44) from Mus musculus (Mouse).